The following is a 178-amino-acid chain: CASP-like protein 2U3 (178 aa).

The Cytoplasmic portion of the chain corresponds to 1–4; the sequence is MACR. The chain crosses the membrane as a helical span at residues 5-25; it reads VMEVLLRVLAILLSIAGALVM. Over 26-52 the chain is Extracellular; it reads AKDKQDTFVMLGTVPVPLYARHSYVEA. The helical transmembrane segment at 53–73 threads the bilayer; the sequence is FVFLVYANGIVAIYCFIAVLL. Residues 74–80 are Cytoplasmic-facing; it reads SLLAKSR. A helical membrane pass occupies residues 81 to 101; sequence VLAGLLFFMDQALAYLLLAAA. The Extracellular segment spans residues 102-132; sequence AASTEVAYIAKRGEKKLVWGEVCSNFEHFCN. A helical membrane pass occupies residues 133-153; the sequence is LVGVSLVLTFLSVLVLVTLAI. Residues 154 to 178 are Cytoplasmic-facing; the sequence is LSGKRLFGHPPLCAPPSTPPVHQGV.

The protein belongs to the Casparian strip membrane proteins (CASP) family. As to quaternary structure, homodimer and heterodimers.

It is found in the cell membrane. This is CASP-like protein 2U3 from Pteridium aquilinum subsp. aquilinum (Bracken fern).